Consider the following 36-residue polypeptide: Serum amyloid P-component (36 aa).

One can recognise a Pentraxin (PTX) domain in the interval 6–36 (SGKVFVIPMATSTSHVKLHARVSEPISAMTM).

The protein belongs to the pentraxin family. In terms of assembly, homopentamer. Discoid arrangement of 5 covalently bound subunits. The cofactor is Ca(2+).

The protein resides in the secreted. This is Serum amyloid P-component from Salmo salar (Atlantic salmon).